Consider the following 336-residue polypeptide: P2Y purinoceptor 13 (336 aa).

Over methionine 1–valine 32 the chain is Extracellular. N-linked (GlcNAc...) asparagine glycans are attached at residues asparagine 6 and asparagine 14. A helical membrane pass occupies residues leucine 33 to isoleucine 53. Topologically, residues histidine 54–threonine 60 are cytoplasmic. Residues phenylalanine 61–phenylalanine 81 form a helical membrane-spanning segment. Over lysine 82–threonine 100 the chain is Extracellular. A disulfide bridge links cysteine 99 with cysteine 176. Residues phenylalanine 101–alanine 121 traverse the membrane as a helical segment. The Cytoplasmic portion of the chain corresponds to phenylalanine 122 to lysine 144. Residues isoleucine 145–asparagine 165 form a helical membrane-spanning segment. Residues lysine 166–histidine 193 lie on the Extracellular side of the membrane. The chain crosses the membrane as a helical span at residues threonine 194–alanine 214. Residues lysine 215–lysine 237 lie on the Cytoplasmic side of the membrane. Residues valine 238–proline 258 form a helical membrane-spanning segment. Over tyrosine 259–glutamate 281 the chain is Extracellular. The N-linked (GlcNAc...) asparagine glycan is linked to asparagine 266. The helical transmembrane segment at serine 282–cysteine 302 threads the bilayer. Residues lysine 303–serine 336 are Cytoplasmic-facing.

Belongs to the G-protein coupled receptor 1 family. Highest levels in spleen, liver brain and kidney. Lower but significant level are also detected in intestine, stomach, skeletal muscle, testis, heart and lung.

Its subcellular location is the cell membrane. Functionally, receptor for ADP. Coupled to G(i)-proteins. May play a role in hematopoiesis and the immune system. The protein is P2Y purinoceptor 13 (P2ry13) of Rattus norvegicus (Rat).